We begin with the raw amino-acid sequence, 183 residues long: Ribosome maturation factor RimM (183 aa).

The region spanning 104–183 (EGDYYWKDLI…TIEVDWDPGF (80 aa)) is the PRC barrel domain.

Belongs to the RimM family. Binds ribosomal protein uS19.

It localises to the cytoplasm. An accessory protein needed during the final step in the assembly of 30S ribosomal subunit, possibly for assembly of the head region. Essential for efficient processing of 16S rRNA. May be needed both before and after RbfA during the maturation of 16S rRNA. It has affinity for free ribosomal 30S subunits but not for 70S ribosomes. In Cronobacter sakazakii (strain ATCC BAA-894) (Enterobacter sakazakii), this protein is Ribosome maturation factor RimM.